We begin with the raw amino-acid sequence, 340 residues long: tRNA N6-adenosine threonylcarbamoyltransferase (340 aa).

Fe cation is bound by residues histidine 111 and histidine 115. Substrate contacts are provided by residues 134 to 138 (LVSGG), aspartate 167, glycine 180, and asparagine 276. Aspartate 304 is a binding site for Fe cation.

It belongs to the KAE1 / TsaD family. Fe(2+) is required as a cofactor.

The protein localises to the cytoplasm. The catalysed reaction is L-threonylcarbamoyladenylate + adenosine(37) in tRNA = N(6)-L-threonylcarbamoyladenosine(37) in tRNA + AMP + H(+). Its function is as follows. Required for the formation of a threonylcarbamoyl group on adenosine at position 37 (t(6)A37) in tRNAs that read codons beginning with adenine. Is involved in the transfer of the threonylcarbamoyl moiety of threonylcarbamoyl-AMP (TC-AMP) to the N6 group of A37, together with TsaE and TsaB. TsaD likely plays a direct catalytic role in this reaction. This Helicobacter pylori (strain J99 / ATCC 700824) (Campylobacter pylori J99) protein is tRNA N6-adenosine threonylcarbamoyltransferase.